The chain runs to 399 residues: Peroxisome assembly protein 12 (399 aa).

The interval 1–24 (MSFYSNLPSAGQSSRGSSTSGRNG) is disordered. The Peroxisomal matrix portion of the chain corresponds to 1 to 33 (MSFYSNLPSAGQSSRGSSTSGRNGVGLEPLYPT). The span at 9–24 (SAGQSSRGSSTSGRNG) shows a compositional bias: low complexity. The chain crosses the membrane as a helical span at residues 34–62 (IFEIMSSQEIDSLLPASIRYLLANHLVAN). Residues 63–67 (FPNRY) are Cytoplasmic-facing. The chain crosses the membrane as a helical span at residues 68-92 (TLRLNKYFFEWFQAIKGFVEWYHLK). At 93–136 (TYNSTFIDRFYGLQLFSSRDRNLALTQCLNPKGQSEWPQGLQLN) the chain is on the peroxisomal matrix side. A helical transmembrane segment spans residues 137–168 (QQQKSVIFLEKIILPYITAKLDEILEKISMNN). The Cytoplasmic segment spans residues 169-171 (IFS). Residues 172–208 (SDETENKWPKRAFLRIYPFIKKLLALSNLLVKLLFLT) traverse the membrane as a helical segment. The Peroxisomal matrix segment spans residues 209-277 (KRTGSVSLLQ…PRFLTFMGSQ (69 aa)). Residues 278 to 305 (FFPTFIFVLRVYQWWTTQDMTTKLQKRV) form a helical membrane-spanning segment. At 306–399 (NDLDEDIPRP…VVTGIRKLLI (94 aa)) the chain is on the cytoplasmic side. C334, C337, C354, and C357 together coordinate Zn(2+). An RING-type; degenerate zinc finger spans residues 334–373 (CPVCEKTVQNPCVLETGYVACYPCAISYLVNNEGHCPVTN).

The protein belongs to the pex2/pex10/pex12 family. In terms of assembly, component of the PEX2-PEX10-PEX12 retrotranslocation channel, composed of PEX2, PEX10 and PEX12.

The protein resides in the peroxisome membrane. It functions in the pathway protein modification; protein ubiquitination. Component of a retrotranslocation channel required for peroxisome organization by mediating export of the PEX5 receptor from peroxisomes to the cytosol, thereby promoting PEX5 recycling. The retrotranslocation channel is composed of PEX2, PEX10 and PEX12; each subunit contributing transmembrane segments that coassemble into an open channel that specifically allows the passage of PEX5 through the peroxisomal membrane. PEX12 also regulates PEX5 recycling by activating the E3 ubiquitin-protein ligase activity of PEX10. When PEX5 recycling is compromised, PEX12 stimulates PEX10-mediated polyubiquitination of PEX5, leading to its subsequent degradation. This Saccharomyces cerevisiae (strain ATCC 204508 / S288c) (Baker's yeast) protein is Peroxisome assembly protein 12.